We begin with the raw amino-acid sequence, 144 residues long: Large ribosomal subunit protein uL15 (144 aa).

The segment at 1 to 57 (MRFNELQPAKGSRFAGKRLGRGIGSGLGKTSGKGHKGQKARSGGYHKVGFEGGQMPL) is disordered. The span at 21–31 (RGIGSGLGKTS) shows a compositional bias: gly residues.

The protein belongs to the universal ribosomal protein uL15 family. As to quaternary structure, part of the 50S ribosomal subunit.

In terms of biological role, binds to the 23S rRNA. This Dichelobacter nodosus (strain VCS1703A) protein is Large ribosomal subunit protein uL15.